We begin with the raw amino-acid sequence, 328 residues long: Cytochrome c biogenesis protein CcsA (328 aa).

A run of 8 helical transmembrane segments spans residues 15–35 (FLVLFLTMLVYWAGAAFPSIP), 36–56 (LLPGLGSTGVAIANLCIAALL), 68–88 (ISNLYESLFFLAWGVTAVHLI), 97–117 (LVGVVTTPVAMGITAFATLSL), 142–162 (VMMLSYAALMVGSLMAIAFLI), 236–256 (VIGLGFPLLTIGIIAGAVWAN), 263–283 (WSWDPKETWALITWLVFAAYL), and 297–317 (AILAASGFVVVWVCYLGVNLL).

It belongs to the CcmF/CycK/Ccl1/NrfE/CcsA family. In terms of assembly, may interact with ccs1.

The protein resides in the cellular thylakoid membrane. Functionally, required during biogenesis of c-type cytochromes (cytochrome c6 and cytochrome f) at the step of heme attachment. This Microcystis aeruginosa (strain NIES-843 / IAM M-2473) protein is Cytochrome c biogenesis protein CcsA.